The sequence spans 517 residues: Ribonuclease Y (517 aa).

The helical transmembrane segment at 3 to 23 (AILYVIVAVIALILGGAAGVA) threads the bilayer. A KH domain is found at 207-292 (TVTVVSLPND…EMVEKAQKEV (86 aa)). An HD domain is found at 333-426 (VLKHSIEVAH…VAAADAISAA (94 aa)).

This sequence belongs to the RNase Y family.

It is found in the cell membrane. Its function is as follows. Endoribonuclease that initiates mRNA decay. The polypeptide is Ribonuclease Y (Symbiobacterium thermophilum (strain DSM 24528 / JCM 14929 / IAM 14863 / T)).